The chain runs to 111 residues: Anti-adapter protein IraM (111 aa).

This sequence belongs to the IraM/RssC family.

The protein resides in the cytoplasm. Functionally, inhibits RpoS proteolysis by regulating RssB activity, thereby increasing the stability of the sigma stress factor RpoS during magnesium starvation. This chain is Anti-adapter protein IraM, found in Escherichia coli O127:H6 (strain E2348/69 / EPEC).